An 890-amino-acid polypeptide reads, in one-letter code: Translation initiation factor IF-2 (890 aa).

A disordered region spans residues 45–302 (LIDHLNQKNS…SSLQQGFQKP (258 aa)). Residues 67–81 (STLNIPSTGGKSKSV) are compositionally biased toward polar residues. Over residues 92–217 (VKRDPQEAER…RMAEENKWTD (126 aa)) the composition is skewed to basic and acidic residues. The span at 252–266 (GRGRNAKAARPKKGN) shows a compositional bias: basic residues. A compositionally biased stretch (basic and acidic residues) spans 267–280 (KHAESKADREEARA). Positions 389–558 (PRAPVVTIMG…LLQAEVLELK (170 aa)) constitute a tr-type G domain. The interval 398–405 (GHVDHGKT) is G1. A GTP-binding site is contributed by 398–405 (GHVDHGKT). The segment at 423–427 (GITQH) is G2. The segment at 444–447 (DTPG) is G3. GTP-binding positions include 444–448 (DTPGH) and 498–501 (NKID). The interval 498–501 (NKID) is G4. The interval 534 to 536 (SAK) is G5. Lys-808 carries the post-translational modification N6-acetyllysine.

The protein belongs to the TRAFAC class translation factor GTPase superfamily. Classic translation factor GTPase family. IF-2 subfamily.

The protein localises to the cytoplasm. Functionally, one of the essential components for the initiation of protein synthesis. Protects formylmethionyl-tRNA from spontaneous hydrolysis and promotes its binding to the 30S ribosomal subunits. Also involved in the hydrolysis of GTP during the formation of the 70S ribosomal complex. The protein is Translation initiation factor IF-2 of Shigella dysenteriae serotype 1 (strain Sd197).